A 167-amino-acid chain; its full sequence is Small ribosomal subunit protein uS3m (167 aa).

The transit peptide at 1 to 35 (MVALYCGGGLRPLMLSWSRDLPCIWRALHTSAVCF) directs the protein to the mitochondrion.

Belongs to the universal ribosomal protein uS3 family. In terms of assembly, component of the mitochondrial ribosome small subunit (28S) which comprises a 12S rRNA and about 30 distinct proteins.

The protein resides in the mitochondrion. This Bos taurus (Bovine) protein is Small ribosomal subunit protein uS3m (MRPS24).